Here is a 397-residue protein sequence, read N- to C-terminus: N-acetyllactosaminide beta-1,3-N-acetylglucosaminyltransferase 2 (397 aa).

Residues 1–7 lie on the Cytoplasmic side of the membrane; that stretch reads MSVGRRR. The helical; Signal-anchor for type II membrane protein transmembrane segment at 8–28 threads the bilayer; it reads IKLLGILMMANVFIYFIMEVS. The Lumenal segment spans residues 29–397; that stretch reads KSSSQEKNGK…SQLQSAHLKC (369 aa). N-linked (GlcNAc...) asparagine glycosylation is found at Asn-79, Asn-89, Asn-127, Asn-173, and Asn-219.

The protein belongs to the glycosyltransferase 31 family. As to quaternary structure, interacts with B3GNT8; this interaction greatly increases B3GNT2 catalytic activity, independently of B3GNT8 enzymatic activity. Requires Mn(2+) as cofactor. In terms of tissue distribution, ubiquitous.

It is found in the golgi apparatus membrane. The catalysed reaction is a beta-D-galactosyl-(1-&gt;4)-N-acetyl-beta-D-glucosaminyl derivative + UDP-N-acetyl-alpha-D-glucosamine = an N-acetyl-beta-D-glucosaminyl-(1-&gt;3)-beta-D-galactosyl-(1-&gt;4)-N-acetyl-beta-D-glucosaminyl derivative + UDP + H(+). Its pathway is protein modification; protein glycosylation. Beta-1,3-N-acetylglucosaminyltransferase involved in the synthesis of poly-N-acetyllactosamine. Catalyzes the initiation and elongation of poly-N-acetyllactosamine chains. Shows a marked preference for Gal(beta1-4)Glc(NAc)-based acceptors. Probably constitutes the main polylactosamine synthase. This chain is N-acetyllactosaminide beta-1,3-N-acetylglucosaminyltransferase 2 (B3GNT2), found in Homo sapiens (Human).